A 326-amino-acid polypeptide reads, in one-letter code: ELMO domain-containing protein 1 (326 aa).

An ELMO domain is found at 133-306; the sequence is QHEEMLLKLW…KFRKRIIKQL (174 aa).

Its function is as follows. Acts as a GTPase-activating protein (GAP) toward guanine nucleotide exchange factors like ARL2, ARL3, ARF1 and ARF6, but not for GTPases outside the Arf family. The polypeptide is ELMO domain-containing protein 1 (Elmod1) (Mus musculus (Mouse)).